We begin with the raw amino-acid sequence, 800 residues long: Protein PET111, mitochondrial (800 aa).

The protein to yeast YHR160C.

It is found in the mitochondrion matrix. Required for translation of the mitochondrial gene for cytochrome c oxidase subunit II (COX2). The protein is Protein PET111, mitochondrial (PET111) of Saccharomyces cerevisiae (strain ATCC 204508 / S288c) (Baker's yeast).